Consider the following 336-residue polypeptide: Tryptophan--tRNA ligase (336 aa).

Residues 16–18 and 24–25 each bind ATP; these read QPT and GN. The 'HIGH' region motif lies at 17-25; that stretch reads PTGQLHLGN. Aspartate 140 serves as a coordination point for L-tryptophan. Residues 152–154, valine 191, and 200–204 contribute to the ATP site; these read GED and KMSKS. A 'KMSKS' region motif is present at residues 200-204; that stretch reads KMSKS.

The protein belongs to the class-I aminoacyl-tRNA synthetase family. As to quaternary structure, homodimer.

The protein resides in the cytoplasm. The catalysed reaction is tRNA(Trp) + L-tryptophan + ATP = L-tryptophyl-tRNA(Trp) + AMP + diphosphate + H(+). In terms of biological role, catalyzes the attachment of tryptophan to tRNA(Trp). In Gloeobacter violaceus (strain ATCC 29082 / PCC 7421), this protein is Tryptophan--tRNA ligase.